The primary structure comprises 257 residues: Phycoerythrobilin:ferredoxin oxidoreductase (257 aa).

The protein belongs to the HY2 family.

It carries out the reaction (3Z)-phycoerythrobilin + oxidized 2[4Fe-4S]-[ferredoxin] = 15,16-dihydrobiliverdin + reduced 2[4Fe-4S]-[ferredoxin] + 2 H(+). Catalyzes the two-electron reduction of the C2 and C3(1) diene system of 15,16-dihydrobiliverdin. This is Phycoerythrobilin:ferredoxin oxidoreductase (pebB) from Synechococcus sp. (strain WH8020).